Here is a 1150-residue protein sequence, read N- to C-terminus: Solute carrier family 12 member 6 (1150 aa).

Residues methionine 1–glycine 108 form a disordered region. The Cytoplasmic portion of the chain corresponds to methionine 1–leucine 135. The segment covering leucine 28 to phenylalanine 45 has biased composition (low complexity). Serine 32 is modified (phosphoserine). Residues aspartate 80–histidine 101 are compositionally biased toward polar residues. Serine 120 is subject to Phosphoserine. Residues phenylalanine 136 to asparagine 158 traverse the membrane as a discontinuously helical segment. K(+) contacts are provided by serine 147 and serine 148. Serine 148 carries the post-translational modification Phosphoserine. Asparagine 151 is a binding site for chloride. Residues leucine 159–glutamate 165 lie on the Extracellular side of the membrane. The interval glutamine 161–lysine 181 is disordered. The span at alanine 163–lysine 177 shows a compositional bias: basic and acidic residues. The helical transmembrane segment at histidine 166–phenylalanine 188 threads the bilayer. Over methionine 189–valine 211 the chain is Cytoplasmic. A helical membrane pass occupies residues valine 212 to glycine 245. At valine 246–glutamate 263 the chain is on the extracellular side. 2 consecutive transmembrane segments (helical) span residues phenylalanine 264–alanine 287 and isoleucine 288–asparagine 316. K(+) is bound at residue tyrosine 283. The Extracellular portion of the chain corresponds to asparagine 317–glutamine 433. Cysteine 375 and cysteine 390 are disulfide-bonded. N-linked (GlcNAc...) asparagine glycans are attached at residues asparagine 379, asparagine 398, asparagine 411, and asparagine 417. Cysteine 410 and cysteine 420 are oxidised to a cystine. The helical transmembrane segment at glycine 434 to lysine 454 threads the bilayer. Residues isoleucine 443, threonine 444, and asparagine 446 each contribute to the K(+) site. Residues isoleucine 443 and threonine 444 each contribute to the chloride site. Residues leucine 447 and tryptophan 448 each coordinate chloride. At glycine 455–lysine 464 the chain is on the cytoplasmic side. The chain crosses the membrane as a helical span at residues serine 465–leucine 487. The Extracellular segment spans residues leucine 488 to isoleucine 518. Threonine 497 is a binding site for K(+). Residues glycine 519–valine 545 form a helical membrane-spanning segment. Residues valine 546 to serine 568 are Cytoplasmic-facing. Helical transmembrane passes span proline 569 to threonine 589 and glycine 590 to histidine 612. Isoleucine 603 lines the chloride pocket. Residues serine 613–isoleucine 629 lie on the Cytoplasmic side of the membrane. The next 2 helical transmembrane spans lie at alanine 630–phenylalanine 649 and phenylalanine 650–threonine 665. Tyrosine 654 contributes to the chloride binding site. At leucine 666–serine 1150 the chain is on the cytoplasmic side. Residues alanine 682–cysteine 691 form a scissor helix region. Serine 736 carries the phosphoserine modification. Threonine 778 carries the phosphothreonine modification. Residue serine 981 is modified to Phosphoserine. Threonine 991 is subject to Phosphothreonine. Phosphoserine is present on residues serine 1023, serine 1029, and serine 1032. A Phosphothreonine modification is found at threonine 1048. Tyrosine 1121 carries the post-translational modification Phosphotyrosine.

It belongs to the SLC12A transporter family. K/Cl co-transporter subfamily. Homodimer; adopts a domain-swap conformation at the scissor helices connecting the transmembrane domain and C-terminal domain. Heterodimer with K-Cl cotransporter SLC12A5. Interacts (via C-terminus) with CKB; the interaction may be required for potassium-chloride cotransport activity. Post-translationally, phosphorylated, phosphorylation regulates transporter activity. Phosphorylated at Thr-991 and Thr-1048 by OXSR1/OSR1 and STK39/SPAK downstream of WNK kinases (WNK1, WNK2, WNK3 or WNK4), inhibiting the potassium-chloride cotransport activity. N-glycosylated. Expressed in hippocampus and corpus callosum (at protein level). Highly expressed throughout the brain and detected at lower levels in kidney. Highly expressed in highly myelinated white matter of the brain, but not in gray matter. Detected in the corpus callosum, in packed cell layers of the hippocampus and in Purkinje neurons within the cerebellum. Highly expressed in white matter in the spinal cord, but not in dorsal root ganglia or sciatic nerve. Colocalizes with the oligodendrocyte marker CNP. Expressed in hippocampus in CA1, and to a lesser extent CA3 pyramidal cells. Also expressed in cortex, mostly in large neurons and in the large cerebellar Purkinje cells. As to expression, highly expressed in kidney, but not detected in brain.

It localises to the cell membrane. The protein localises to the basolateral cell membrane. It catalyses the reaction K(+)(in) + chloride(in) = K(+)(out) + chloride(out). Inhibited following phosphorylation by OXSR1/OSR1 and STK39/SPAK: phosphorylation takes place downstream of WNK kinases (WNK1, WNK2, WNK3 or WNK4) in response to hyperosmotic stress and subsequent cell shrinkage. In terms of biological role, mediates electroneutral potassium-chloride cotransport when activated by cell swelling. May contribute to cell volume homeostasis in single cells. Functionally, mediates electroneutral potassium-chloride cotransport when activated by cell swelling. May contribute to cell volume homeostasis in single cells. The polypeptide is Solute carrier family 12 member 6 (Slc12a6) (Mus musculus (Mouse)).